The following is a 159-amino-acid chain: Phosphopantetheine adenylyltransferase (159 aa).

Residue serine 8 participates in substrate binding. ATP contacts are provided by residues 8-9 (SF) and histidine 16. Substrate-binding residues include lysine 40, leucine 73, and lysine 87. ATP contacts are provided by residues 88–90 (GLR), glutamate 98, and 122–128 (YGYVSST).

The protein belongs to the bacterial CoaD family. As to quaternary structure, homohexamer. Mg(2+) is required as a cofactor.

The protein localises to the cytoplasm. The catalysed reaction is (R)-4'-phosphopantetheine + ATP + H(+) = 3'-dephospho-CoA + diphosphate. The protein operates within cofactor biosynthesis; coenzyme A biosynthesis; CoA from (R)-pantothenate: step 4/5. Functionally, reversibly transfers an adenylyl group from ATP to 4'-phosphopantetheine, yielding dephospho-CoA (dPCoA) and pyrophosphate. This Corynebacterium efficiens (strain DSM 44549 / YS-314 / AJ 12310 / JCM 11189 / NBRC 100395) protein is Phosphopantetheine adenylyltransferase.